The following is a 298-amino-acid chain: MTDLHTDVERYLRYLSVERQLSPITLLNYQRQLEAIIHFASENGLQSWQQCDVTMVRNFAVRSRRKGLGAASLALRLSALRSFFDWLVSQNELKANPAKGVSAPKAPRHLPKNIDVDDMNRLLDIDINDPLAVRDRAMLEVMYGAGLRLSELVGLDIKHLDLESGEVWVMGKGSKERRLPIGRNAVAWIEHWLDLRDLFGSEDDALFLSKLGKRISARNVQKRFAEWGIKQGLNNHVHPHKLRHSFATHMLESSGDLRGVQELLGHANLSTTQIYTHLDFQHLASVYDAAHPRAKRGK.

Residues 2–88 form the Core-binding (CB) domain; it reads TDLHTDVERY…ALRSFFDWLV (87 aa). The Tyr recombinase domain maps to 109–288; the sequence is HLPKNIDVDD…DFQHLASVYD (180 aa). Residues Arg-148, Lys-172, His-240, Arg-243, and His-266 contribute to the active site. Tyr-275 (O-(3'-phospho-DNA)-tyrosine intermediate) is an active-site residue.

Belongs to the 'phage' integrase family. XerC subfamily. Forms a cyclic heterotetrameric complex composed of two molecules of XerC and two molecules of XerD, in which XerC interacts with XerD via its C-terminal region, XerD interacts with XerC via its C-terminal region and so on.

The protein resides in the cytoplasm. With respect to regulation, ftsK may regulate the catalytic switch between XerC and XerD in the heterotetrameric complex during the two steps of the recombination process. Site-specific tyrosine recombinase, which acts by catalyzing the cutting and rejoining of the recombining DNA molecules. Binds cooperatively to specific DNA consensus sequences that are separated from XerD binding sites by a short central region, forming the heterotetrameric XerC-XerD complex that recombines DNA substrates. The complex is essential to convert dimers of the bacterial chromosome into monomers to permit their segregation at cell division. It also contributes to the segregational stability of plasmids. In the complex XerC specifically exchanges the top DNA strands. In Escherichia coli O45:K1 (strain S88 / ExPEC), this protein is Tyrosine recombinase XerC.